A 255-amino-acid chain; its full sequence is DNA repair protein RecO (255 aa).

The protein belongs to the RecO family.

Involved in DNA repair and RecF pathway recombination. This Listeria monocytogenes serotype 4b (strain CLIP80459) protein is DNA repair protein RecO.